The chain runs to 435 residues: U-box domain-containing protein 36 (435 aa).

Residues 227–345 (EAEASKRKAR…LKGKREEEEA (119 aa)) are a coiled coil. The U-box domain maps to 352–426 (EPPQYFICPI…QEWLQLRELL (75 aa)).

The catalysed reaction is S-ubiquitinyl-[E2 ubiquitin-conjugating enzyme]-L-cysteine + [acceptor protein]-L-lysine = [E2 ubiquitin-conjugating enzyme]-L-cysteine + N(6)-ubiquitinyl-[acceptor protein]-L-lysine.. The protein operates within protein modification; protein ubiquitination. Functions as an E3 ubiquitin ligase. The chain is U-box domain-containing protein 36 (PUB36) from Arabidopsis thaliana (Mouse-ear cress).